Consider the following 185-residue polypeptide: Small ribosomal subunit protein uS7 (185 aa).

This sequence belongs to the universal ribosomal protein uS7 family. In terms of assembly, part of the 30S ribosomal subunit.

Functionally, one of the primary rRNA binding proteins, it binds directly to 16S rRNA where it nucleates assembly of the head domain of the 30S subunit. Is located at the subunit interface close to the decoding center. This chain is Small ribosomal subunit protein uS7, found in Methanosarcina barkeri (strain Fusaro / DSM 804).